The primary structure comprises 810 residues: Phenylalanine--tRNA ligase beta subunit (810 aa).

The 112-residue stretch at 39–150 folds into the tRNA-binding domain; that stretch reads RTWANGVVVG…ENLPLGSDVR (112 aa). In terms of domain architecture, B5 spans 411–495; sequence TWSRSIFLRL…RLYGYDNFCD (85 aa). Residues Asp473, Asp479, Glu482, and Glu483 each contribute to the Mg(2+) site. Residues 716-809 form the FDX-ACB domain; the sequence is STYPASDRDI…LVEKFGVNLR (94 aa).

This sequence belongs to the phenylalanyl-tRNA synthetase beta subunit family. Type 1 subfamily. In terms of assembly, tetramer of two alpha and two beta subunits. The cofactor is Mg(2+).

It is found in the cytoplasm. The catalysed reaction is tRNA(Phe) + L-phenylalanine + ATP = L-phenylalanyl-tRNA(Phe) + AMP + diphosphate + H(+). This Trichormus variabilis (strain ATCC 29413 / PCC 7937) (Anabaena variabilis) protein is Phenylalanine--tRNA ligase beta subunit.